Consider the following 339-residue polypeptide: Phenylalanine--tRNA ligase alpha subunit (339 aa).

Glu254 serves as a coordination point for Mg(2+).

Belongs to the class-II aminoacyl-tRNA synthetase family. Phe-tRNA synthetase alpha subunit type 1 subfamily. As to quaternary structure, tetramer of two alpha and two beta subunits. The cofactor is Mg(2+).

Its subcellular location is the cytoplasm. The catalysed reaction is tRNA(Phe) + L-phenylalanine + ATP = L-phenylalanyl-tRNA(Phe) + AMP + diphosphate + H(+). This is Phenylalanine--tRNA ligase alpha subunit from Clostridium botulinum (strain ATCC 19397 / Type A).